Here is a 721-residue protein sequence, read N- to C-terminus: Catalase-peroxidase 1 (721 aa).

A cross-link (tryptophyl-tyrosyl-methioninium (Trp-Tyr) (with M-249)) is located at residues 98-223; it reads WHAAGSYRVA…LAAVQMGLIY (126 aa). Catalysis depends on histidine 99, which acts as the Proton acceptor. The tryptophyl-tyrosyl-methioninium (Tyr-Met) (with W-98) cross-link spans 223-249; the sequence is YVNPEGVNGQPDPLRTAQDVRVTFGRM. Histidine 264 contributes to the heme b binding site.

The protein belongs to the peroxidase family. Peroxidase/catalase subfamily. Homodimer or homotetramer. Requires heme b as cofactor. Post-translationally, formation of the three residue Trp-Tyr-Met cross-link is important for the catalase, but not the peroxidase activity of the enzyme.

It catalyses the reaction H2O2 + AH2 = A + 2 H2O. It carries out the reaction 2 H2O2 = O2 + 2 H2O. In terms of biological role, bifunctional enzyme with both catalase and broad-spectrum peroxidase activity. This is Catalase-peroxidase 1 from Legionella pneumophila subsp. pneumophila (strain Philadelphia 1 / ATCC 33152 / DSM 7513).